The chain runs to 159 residues: Olfactory receptor-like protein COR8 (159 aa).

Topologically, residues 1–16 (VAICNPLLYTISMPKS) are cytoplasmic. Residues 17-41 (LCMKLVAGSYLGGVLNSLTQTCCLL) form a helical membrane-spanning segment. At 42-82 (PLPFCGPNVINHYFCDTNPLLKLTCSDGRLNELLLVTFNGT) the chain is on the extracellular side. Asparagine 80 carries N-linked (GlcNAc...) asparagine glycosylation. Residues 83–103 (ISMTVLLIIVISYVYILVSIL) traverse the membrane as a helical segment. At 104-116 (SIRSARGRHKAFS) the chain is on the cytoplasmic side. Residues 117–137 (TCASHLLTVTLFYVPAGLSHM) form a helical membrane-spanning segment. Residues 138–148 (QPGSKYSLDME) lie on the Extracellular side of the membrane. The chain crosses the membrane as a helical span at residues 149-159 (KVTAVFYTLLV).

This sequence belongs to the G-protein coupled receptor 1 family.

It localises to the cell membrane. In terms of biological role, odorant receptor. The sequence is that of Olfactory receptor-like protein COR8 (COR8) from Gallus gallus (Chicken).